We begin with the raw amino-acid sequence, 590 residues long: Membrane protein insertase YidC (590 aa).

A run of 5 helical transmembrane segments spans residues 5-25 (SVIGFALIAAIMIVWLQFMKP), 368-388 (GLIIIIFAFLIKLVTWPLSLA), 433-453 (LGGCLPTVIQMPLLFAMFYVF), 483-503 (LPLYGDHIAIMPILMAVTVFF), and 519-539 (IMMWLFPAMMLFFFNNMPAGL).

This sequence belongs to the OXA1/ALB3/YidC family. Type 1 subfamily. Interacts with the Sec translocase complex via SecD. Specifically interacts with transmembrane segments of nascent integral membrane proteins during membrane integration.

It localises to the cell inner membrane. Required for the insertion and/or proper folding and/or complex formation of integral membrane proteins into the membrane. Involved in integration of membrane proteins that insert both dependently and independently of the Sec translocase complex, as well as at least some lipoproteins. Aids folding of multispanning membrane proteins. This chain is Membrane protein insertase YidC, found in Chlorobaculum tepidum (strain ATCC 49652 / DSM 12025 / NBRC 103806 / TLS) (Chlorobium tepidum).